We begin with the raw amino-acid sequence, 388 residues long: Succinate--CoA ligase [ADP-forming] subunit beta (388 aa).

The 236-residue stretch at 9–244 (KQLFKEYGLP…PSQEDAREAH (236 aa)) folds into the ATP-grasp domain. ATP-binding positions include Lys46, 53 to 55 (GRG), Glu99, Thr102, and Glu107. Residues Asn199 and Asp213 each coordinate Mg(2+). Residues Asn264 and 321–323 (GIV) contribute to the substrate site.

This sequence belongs to the succinate/malate CoA ligase beta subunit family. In terms of assembly, heterotetramer of two alpha and two beta subunits. It depends on Mg(2+) as a cofactor.

The enzyme catalyses succinate + ATP + CoA = succinyl-CoA + ADP + phosphate. The catalysed reaction is GTP + succinate + CoA = succinyl-CoA + GDP + phosphate. It functions in the pathway carbohydrate metabolism; tricarboxylic acid cycle; succinate from succinyl-CoA (ligase route): step 1/1. Its function is as follows. Succinyl-CoA synthetase functions in the citric acid cycle (TCA), coupling the hydrolysis of succinyl-CoA to the synthesis of either ATP or GTP and thus represents the only step of substrate-level phosphorylation in the TCA. The beta subunit provides nucleotide specificity of the enzyme and binds the substrate succinate, while the binding sites for coenzyme A and phosphate are found in the alpha subunit. The sequence is that of Succinate--CoA ligase [ADP-forming] subunit beta from Alteromonas mediterranea (strain DSM 17117 / CIP 110805 / LMG 28347 / Deep ecotype).